The sequence spans 312 residues: Zinc transporter ZitB (312 aa).

Transmembrane regions (helical) follow at residues 21 to 41 (LLFA…GGIL), 48 to 68 (LADA…LLAV), 90 to 110 (AAFV…WEAI), 123 to 143 (LMMV…WILH), and 164 to 184 (LLGS…GWTP).

This sequence belongs to the cation diffusion facilitator (CDF) transporter (TC 2.A.4) family. SLC30A subfamily.

The protein resides in the cell inner membrane. Its function is as follows. Involved in zinc efflux across the cytoplasmic membrane, thus reducing zinc accumulation in the cytoplasm and rendering bacteria more resistant to zinc. It may contribute to zinc homeostasis at low concentrations of zinc. The chain is Zinc transporter ZitB from Salmonella typhimurium (strain LT2 / SGSC1412 / ATCC 700720).